Consider the following 277-residue polypeptide: Putative phosphoenolpyruvate synthase regulatory protein (277 aa).

Position 157-164 (157-164 (GVSRCGKT)) interacts with ADP.

It belongs to the pyruvate, phosphate/water dikinase regulatory protein family. PSRP subfamily.

It catalyses the reaction [pyruvate, water dikinase] + ADP = [pyruvate, water dikinase]-phosphate + AMP + H(+). It carries out the reaction [pyruvate, water dikinase]-phosphate + phosphate + H(+) = [pyruvate, water dikinase] + diphosphate. Its function is as follows. Bifunctional serine/threonine kinase and phosphorylase involved in the regulation of the phosphoenolpyruvate synthase (PEPS) by catalyzing its phosphorylation/dephosphorylation. The chain is Putative phosphoenolpyruvate synthase regulatory protein from Klebsiella pneumoniae (strain 342).